The chain runs to 308 residues: Elongation factor Ts (308 aa).

An involved in Mg(2+) ion dislocation from EF-Tu region spans residues 80–83 (TDFV).

Belongs to the EF-Ts family.

It is found in the cytoplasm. Associates with the EF-Tu.GDP complex and induces the exchange of GDP to GTP. It remains bound to the aminoacyl-tRNA.EF-Tu.GTP complex up to the GTP hydrolysis stage on the ribosome. In Parvibaculum lavamentivorans (strain DS-1 / DSM 13023 / NCIMB 13966), this protein is Elongation factor Ts.